The following is a 111-amino-acid chain: MTPAAHGCKRVAWCPSRPPASAPSAPQEAARRGDAMGLKPSCLKGFKMCVSSSNNNHDEAPVLNDKHLSVPNIIITPPTPTGMGLSRDSNKQVWMDELGSYQDDGELEPEA.

The disordered stretch occupies residues A12 to D34. The segment at P71–T76 is required for interaction with PPP3CA. A phosphothreonine mark is found at T79 and T81.

In terms of assembly, interacts (via PxIxIT motif, when phosphorylated on Thr-79) with PPP3CA.

This is an uncharacterized protein from Mus musculus (Mouse).